Consider the following 614-residue polypeptide: Aspartate--tRNA ligase (614 aa).

An L-aspartate-binding site is contributed by E174. Residues 198-201 are aspartate; sequence QLFK. Position 220 (R220) interacts with L-aspartate. Residues 220–222 and Q229 each bind ATP; that span reads RDE. H448 is an L-aspartate binding site. ATP is bound at residue E482. R489 provides a ligand contact to L-aspartate. Residue 534 to 537 coordinates ATP; that stretch reads GLDR. The interval 587–614 is disordered; sequence YEDSVKETEQRLEKEAQEDADKNSTWDE.

The protein belongs to the class-II aminoacyl-tRNA synthetase family. Type 1 subfamily. As to quaternary structure, homodimer.

The protein resides in the cytoplasm. The enzyme catalyses tRNA(Asp) + L-aspartate + ATP = L-aspartyl-tRNA(Asp) + AMP + diphosphate. Functionally, catalyzes the attachment of L-aspartate to tRNA(Asp) in a two-step reaction: L-aspartate is first activated by ATP to form Asp-AMP and then transferred to the acceptor end of tRNA(Asp). This chain is Aspartate--tRNA ligase, found in Lactobacillus johnsonii (strain CNCM I-12250 / La1 / NCC 533).